We begin with the raw amino-acid sequence, 167 residues long: UPF0179 protein Pisl_0688 (167 aa).

This sequence belongs to the UPF0179 family.

The protein is UPF0179 protein Pisl_0688 of Pyrobaculum islandicum (strain DSM 4184 / JCM 9189 / GEO3).